The chain runs to 412 residues: Class E basic helix-loop-helix protein 40 (412 aa).

A disordered region spans residues Met1–Glu21. The tract at residues Met1–Gln139 is essential for interaction with BMAL1, E-box binding and repressor activity against the CLOCK-BMAL1 heterodimer. The bHLH domain maps to Thr52–Leu107. The necessary for interaction with RXRA and repressor activity against RXRA stretch occupies residues Leu75 to Leu79. Positions Phe142 to Leu175 constitute an Orange domain. Lys159 is covalently cross-linked (Glycyl lysine isopeptide (Lys-Gly) (interchain with G-Cter in SUMO1, SUMO2 and SUMO3)). Lys167 participates in a covalent cross-link: Glycyl lysine isopeptide (Lys-Gly) (interchain with G-Cter in SUMO2). Disordered stretches follow at residues Leu182–Glu257 and Lys279–Glu298. Ser235 is modified (phosphoserine). The span at Glu248–Glu257 shows a compositional bias: basic and acidic residues. Lys279 participates in a covalent cross-link: Glycyl lysine isopeptide (Lys-Gly) (interchain with G-Cter in SUMO1); alternate. Residue Lys279 forms a Glycyl lysine isopeptide (Lys-Gly) (interchain with G-Cter in SUMO1, SUMO2 and SUMO3); alternate linkage. Residue Lys279 forms a Glycyl lysine isopeptide (Lys-Gly) (interchain with G-Cter in SUMO2); alternate linkage. Lys288 is covalently cross-linked (Glycyl lysine isopeptide (Lys-Gly) (interchain with G-Cter in SUMO2)). The residue at position 383 (Ser383) is a Phosphoserine.

Homodimer. Heterodimer with BHLHE41/DEC2. Interacts with TCF3/E47. Interacts with ubiquitin-conjugating enzyme UBE2I/UBC9. Interacts with HDAC1, SUMO1, RXRA and BMAL1. Post-translationally, ubiquitinated; which may lead to proteasomal degradation. Sumoylation inhibits its ubiquitination and promotes its negative regulation of the CLOCK-BMAL1 heterodimer transcriptional activator activity.

The protein localises to the cytoplasm. It is found in the nucleus. In terms of biological role, transcriptional repressor involved in the regulation of the circadian rhythm by negatively regulating the activity of the clock genes and clock-controlled genes. Acts as the negative limb of a novel autoregulatory feedback loop (DEC loop) which differs from the one formed by the PER and CRY transcriptional repressors (PER/CRY loop). Both these loops are interlocked as it represses the expression of PER1/2 and in turn is repressed by PER1/2 and CRY1/2. Represses the activity of the circadian transcriptional activator: CLOCK-BMAL1|BMAL2 heterodimer by competing for the binding to E-box elements (5'-CACGTG-3') found within the promoters of its target genes. Negatively regulates its own expression and the expression of DBP and BHLHE41/DEC2. Acts as a corepressor of RXR and the RXR-LXR heterodimers and represses the ligand-induced RXRA and NR1H3/LXRA transactivation activity. May be involved in the regulation of chondrocyte differentiation via the cAMP pathway. Represses the transcription of NR0B2 and attentuates the transactivation of NR0B2 by the CLOCK-BMAL1 complex. Drives the circadian rhythm of blood pressure through transcriptional repression of ATP1B1 in the cardiovascular system. The chain is Class E basic helix-loop-helix protein 40 (BHLHE40) from Ovis aries (Sheep).